Consider the following 371-residue polypeptide: 4-hydroxy-3-methylbut-2-en-1-yl diphosphate synthase (flavodoxin) (371 aa).

Positions 270, 273, 305, and 312 each coordinate [4Fe-4S] cluster.

Belongs to the IspG family. Requires [4Fe-4S] cluster as cofactor.

The catalysed reaction is (2E)-4-hydroxy-3-methylbut-2-enyl diphosphate + oxidized [flavodoxin] + H2O + 2 H(+) = 2-C-methyl-D-erythritol 2,4-cyclic diphosphate + reduced [flavodoxin]. Its pathway is isoprenoid biosynthesis; isopentenyl diphosphate biosynthesis via DXP pathway; isopentenyl diphosphate from 1-deoxy-D-xylulose 5-phosphate: step 5/6. Functionally, converts 2C-methyl-D-erythritol 2,4-cyclodiphosphate (ME-2,4cPP) into 1-hydroxy-2-methyl-2-(E)-butenyl 4-diphosphate. The sequence is that of 4-hydroxy-3-methylbut-2-en-1-yl diphosphate synthase (flavodoxin) from Chromohalobacter salexigens (strain ATCC BAA-138 / DSM 3043 / CIP 106854 / NCIMB 13768 / 1H11).